The sequence spans 306 residues: UDP-3-O-acyl-N-acetylglucosamine deacetylase (306 aa).

Residues His-79, His-238, and Asp-242 each contribute to the Zn(2+) site. His-265 functions as the Proton donor in the catalytic mechanism.

Belongs to the LpxC family. It depends on Zn(2+) as a cofactor.

The catalysed reaction is a UDP-3-O-[(3R)-3-hydroxyacyl]-N-acetyl-alpha-D-glucosamine + H2O = a UDP-3-O-[(3R)-3-hydroxyacyl]-alpha-D-glucosamine + acetate. The protein operates within glycolipid biosynthesis; lipid IV(A) biosynthesis; lipid IV(A) from (3R)-3-hydroxytetradecanoyl-[acyl-carrier-protein] and UDP-N-acetyl-alpha-D-glucosamine: step 2/6. Functionally, catalyzes the hydrolysis of UDP-3-O-myristoyl-N-acetylglucosamine to form UDP-3-O-myristoylglucosamine and acetate, the committed step in lipid A biosynthesis. This is UDP-3-O-acyl-N-acetylglucosamine deacetylase from Shewanella baltica (strain OS223).